The sequence spans 244 residues: Acetoacetate decarboxylase (244 aa).

K115 acts as the Schiff-base intermediate with acetoacetate in catalysis.

The protein belongs to the ADC family.

It catalyses the reaction acetoacetate + H(+) = acetone + CO2. Functionally, catalyzes the conversion of acetoacetate to acetone and carbon dioxide. This chain is Acetoacetate decarboxylase, found in Streptomyces nogalater.